A 224-amino-acid chain; its full sequence is UPF0758 protein Noc_0236 (224 aa).

Residues Val102 to Leu224 enclose the MPN domain. Residues His173, His175, and Asp186 each coordinate Zn(2+). The short motif at His173 to Asp186 is the JAMM motif element.

This sequence belongs to the UPF0758 family.

In Nitrosococcus oceani (strain ATCC 19707 / BCRC 17464 / JCM 30415 / NCIMB 11848 / C-107), this protein is UPF0758 protein Noc_0236.